A 216-amino-acid polypeptide reads, in one-letter code: Probable nicotinate-nucleotide adenylyltransferase (216 aa).

Belongs to the NadD family.

It carries out the reaction nicotinate beta-D-ribonucleotide + ATP + H(+) = deamido-NAD(+) + diphosphate. It participates in cofactor biosynthesis; NAD(+) biosynthesis; deamido-NAD(+) from nicotinate D-ribonucleotide: step 1/1. In terms of biological role, catalyzes the reversible adenylation of nicotinate mononucleotide (NaMN) to nicotinic acid adenine dinucleotide (NaAD). The sequence is that of Probable nicotinate-nucleotide adenylyltransferase from Buchnera aphidicola subsp. Schizaphis graminum (strain Sg).